The chain runs to 630 residues: 1-deoxy-D-xylulose-5-phosphate synthase (630 aa).

Residues His72 and 113 to 115 contribute to the thiamine diphosphate site; that span reads GHS. Asp144 provides a ligand contact to Mg(2+). Residues 145–146, Asn173, Tyr284, and Glu367 each bind thiamine diphosphate; that span reads GA. Asn173 is a binding site for Mg(2+).

This sequence belongs to the transketolase family. DXPS subfamily. As to quaternary structure, homodimer. It depends on Mg(2+) as a cofactor. Thiamine diphosphate is required as a cofactor.

It catalyses the reaction D-glyceraldehyde 3-phosphate + pyruvate + H(+) = 1-deoxy-D-xylulose 5-phosphate + CO2. It functions in the pathway metabolic intermediate biosynthesis; 1-deoxy-D-xylulose 5-phosphate biosynthesis; 1-deoxy-D-xylulose 5-phosphate from D-glyceraldehyde 3-phosphate and pyruvate: step 1/1. Functionally, catalyzes the acyloin condensation reaction between C atoms 2 and 3 of pyruvate and glyceraldehyde 3-phosphate to yield 1-deoxy-D-xylulose-5-phosphate (DXP). The chain is 1-deoxy-D-xylulose-5-phosphate synthase from Bacillus cytotoxicus (strain DSM 22905 / CIP 110041 / 391-98 / NVH 391-98).